Here is a 455-residue protein sequence, read N- to C-terminus: Deoxyribodipyrimidine photo-lyase (455 aa).

The 130-residue stretch at 2-131 (SVAVVLFTSD…ELHVHDAVVT (130 aa)) folds into the Photolyase/cryptochrome alpha/beta domain. FAD contacts are provided by residues Y219 and 231-235 (TSRLS). 2 interaction with DNA regions span residues 266 to 273 (QLAWRDFH) and 330 to 331 (NR). 361 to 363 (DGD) provides a ligand contact to FAD. Q392 lines the DNA pocket.

The protein belongs to the DNA photolyase class-1 family. Monomer. Requires FAD as cofactor. Coenzyme F420-(gamma-Glu)n is required as a cofactor.

The enzyme catalyses cyclobutadipyrimidine (in DNA) = 2 pyrimidine residues (in DNA).. Functionally, involved in repair of UV radiation-induced DNA damage. Catalyzes the light-dependent monomerization (300-600 nm) of cyclobutyl pyrimidine dimers (in cis-syn configuration), which are formed between adjacent bases on the same DNA strand upon exposure to ultraviolet radiation. The protein is Deoxyribodipyrimidine photo-lyase (phr) of Streptomyces griseus.